The following is a 273-amino-acid chain: 4-hydroxy-tetrahydrodipicolinate reductase (273 aa).

NAD(+)-binding positions include 12–17 (GAGGRM) and Glu-38. NADP(+) is bound at residue Arg-39. NAD(+) is bound by residues 102-104 (GTT) and 126-129 (AANF). The active-site Proton donor/acceptor is the His-159. His-160 is a (S)-2,3,4,5-tetrahydrodipicolinate binding site. Lys-163 functions as the Proton donor in the catalytic mechanism. Position 169–170 (169–170 (GT)) interacts with (S)-2,3,4,5-tetrahydrodipicolinate.

This sequence belongs to the DapB family. As to quaternary structure, homotetramer.

It is found in the cytoplasm. It catalyses the reaction (S)-2,3,4,5-tetrahydrodipicolinate + NAD(+) + H2O = (2S,4S)-4-hydroxy-2,3,4,5-tetrahydrodipicolinate + NADH + H(+). The catalysed reaction is (S)-2,3,4,5-tetrahydrodipicolinate + NADP(+) + H2O = (2S,4S)-4-hydroxy-2,3,4,5-tetrahydrodipicolinate + NADPH + H(+). Its pathway is amino-acid biosynthesis; L-lysine biosynthesis via DAP pathway; (S)-tetrahydrodipicolinate from L-aspartate: step 4/4. Functionally, catalyzes the conversion of 4-hydroxy-tetrahydrodipicolinate (HTPA) to tetrahydrodipicolinate. The chain is 4-hydroxy-tetrahydrodipicolinate reductase from Escherichia coli (strain K12 / MC4100 / BW2952).